We begin with the raw amino-acid sequence, 253 residues long: Triosephosphate isomerase, cytosolic (253 aa).

Substrate is bound by residues Asn-10 and Lys-12. His-96 functions as the Electrophile in the catalytic mechanism. The Proton acceptor role is filled by Glu-166.

Belongs to the triosephosphate isomerase family. In terms of assembly, homodimer.

Its subcellular location is the cytoplasm. The enzyme catalyses D-glyceraldehyde 3-phosphate = dihydroxyacetone phosphate. Its pathway is carbohydrate biosynthesis; gluconeogenesis. The protein operates within carbohydrate degradation; glycolysis; D-glyceraldehyde 3-phosphate from glycerone phosphate: step 1/1. This Oryza sativa subsp. japonica (Rice) protein is Triosephosphate isomerase, cytosolic (TPI).